The chain runs to 652 residues: Regulator of DNA class I crossover intermediates 1 (652 aa).

Residues 1 to 228 (MNWVGGSRSR…APYKRTNSSE (228 aa)) constitute a DNA-binding region (binds DNA containing a D-loop). 2 disordered regions span residues 464–512 (YLES…KATE) and 621–652 (EKESSHPEAGSCTEDRTADTTGGQETPTSNSL). Residues 467-477 (SSQSSQSASYS) show a composition bias toward low complexity. Composition is skewed to polar residues over residues 478–491 (PRPTESTFSSSTDL) and 639–652 (DTTGGQETPTSNSL).

In terms of assembly, interacts with MSH5. Interacts with TEX11. Expressed mainly in testis (at protein level). Expressed in spermatogonia and enriched in spermatocytes; absent in testicular somatic cells (at protein level). No expression or low levels in other tissues.

Its subcellular location is the chromosome. Its function is as follows. Involved in recombination, probably acting by stabilizing recombination intermediates during meiotic crossover formation. Required for normal germline development and fertility. Required for meiotic progression, complete chromosomal synapsis and crossover formation. Binds double-stranded DNA. However, also binds branched DNA molecules, such as those containing a D-loop or Holliday junction structure. Probably not required for formation of DNA double-strand breaks (DSBs). Also binds RNA in an RNA structure-independent manner, with a preference for binding 3'-UTR regions of mRNAs; may stabilize bound RNAs. The chain is Regulator of DNA class I crossover intermediates 1 from Mus musculus (Mouse).